A 91-amino-acid polypeptide reads, in one-letter code: uncharacterized protein (91 aa).

3 helical membrane passes run 4-21, 28-50, and 60-82; these read YAII…LRRG, IIEV…SHAV, and VKAF…GTYL.

The protein localises to the cell membrane. This is an uncharacterized protein from Archaeoglobus fulgidus (strain ATCC 49558 / DSM 4304 / JCM 9628 / NBRC 100126 / VC-16).